The chain runs to 414 residues: UDP-N-acetylglucosamine 1-carboxyvinyltransferase (414 aa).

Lysine 19–asparagine 20 serves as a coordination point for phosphoenolpyruvate. Arginine 89 is a binding site for UDP-N-acetyl-alpha-D-glucosamine. Catalysis depends on cysteine 113, which acts as the Proton donor. Cysteine 113 is modified (2-(S-cysteinyl)pyruvic acid O-phosphothioketal). Residues arginine 118–leucine 122, aspartate 301, and valine 323 contribute to the UDP-N-acetyl-alpha-D-glucosamine site.

Belongs to the EPSP synthase family. MurA subfamily.

The protein localises to the cytoplasm. It catalyses the reaction phosphoenolpyruvate + UDP-N-acetyl-alpha-D-glucosamine = UDP-N-acetyl-3-O-(1-carboxyvinyl)-alpha-D-glucosamine + phosphate. Its pathway is cell wall biogenesis; peptidoglycan biosynthesis. Functionally, cell wall formation. Adds enolpyruvyl to UDP-N-acetylglucosamine. This chain is UDP-N-acetylglucosamine 1-carboxyvinyltransferase, found in Bdellovibrio bacteriovorus (strain ATCC 15356 / DSM 50701 / NCIMB 9529 / HD100).